Reading from the N-terminus, the 253-residue chain is MNATAIIAASGIGKRMKLANGGCKQMLEIGGFSVIYHTLKAFEQAPSIHNIYLATRAESIPLIQELAASANIGKLTAVVEGGKERQDSINNCIKAIEVKRHQSGVTPDVILVHDGARPFIQPEEIEEIARLSLLFGACVPATRPKDTIKFIGHDPEFFGETLDRNRLVQVQTPQGFRSELLMQAHQQAEAEGWYSTDDAALVERFFPQQLIKIFEMGYHNIKITTPEDILVAEAIYQQLQAHGNATSEAASAS.

It belongs to the IspD/TarI cytidylyltransferase family. IspD subfamily.

The catalysed reaction is 2-C-methyl-D-erythritol 4-phosphate + CTP + H(+) = 4-CDP-2-C-methyl-D-erythritol + diphosphate. It functions in the pathway isoprenoid biosynthesis; isopentenyl diphosphate biosynthesis via DXP pathway; isopentenyl diphosphate from 1-deoxy-D-xylulose 5-phosphate: step 2/6. Catalyzes the formation of 4-diphosphocytidyl-2-C-methyl-D-erythritol from CTP and 2-C-methyl-D-erythritol 4-phosphate (MEP). The protein is 2-C-methyl-D-erythritol 4-phosphate cytidylyltransferase of Chlorobium chlorochromatii (strain CaD3).